A 428-amino-acid polypeptide reads, in one-letter code: uncharacterized protein (428 aa).

Positions 241-351 constitute a Glutaredoxin domain; that stretch reads KEEEEQSVGK…KLLGGCERVE (111 aa). Positions 386–401 are enriched in acidic residues; the sequence is EDDDDDDDEGDDDESV. The interval 386–405 is disordered; the sequence is EDDDDDDDEGDDDESVKEER.

This is an uncharacterized protein from Arabidopsis thaliana (Mouse-ear cress).